We begin with the raw amino-acid sequence, 1594 residues long: Transcription factor Gibbin (1594 aa).

4 disordered regions span residues 19–111 (PDYL…RHWD), 149–241 (LRLS…LADA), 256–307 (QLLE…DPLG), and 367–464 (CSPH…RKGK). The span at 30–47 (GGPPTPRPLLPTRPPASP) shows a compositional bias: pro residues. K79 bears the N6-acetyllysine mark. Residues 165–177 (SFFSSPSLANSIR) show a composition bias toward polar residues. A compositionally biased stretch (basic and acidic residues) spans 178 to 193 (SPEERANPHTKSERPS). A compositionally biased stretch (acidic residues) spans 228–240 (PEPDGPDYSELAD). S267 bears the Phosphoserine mark. Residues 272–303 (PQLLDPQPRFLDPQALEPLGEGLELPPLQPLA) show a composition bias toward low complexity. The segment covering 391–401 (ILCRRRKAGRG) has biased composition (basic residues). The a.T hook 1 DNA-binding region spans 395–407 (RRKAGRGRKADSG). Over residues 427–447 (EPPPLPPPPPPTLSGPGPVPE) the composition is skewed to pro residues. Residues 541-553 (KRKRGRPPKNLLL) constitute a DNA-binding region (a.T hook 2). Residues 578–604 (MPEVKKRRRRKQKLASPQPSYAADAND) are disordered. Phosphoserine is present on S593. Residue K606 forms a Glycyl lysine isopeptide (Lys-Gly) (interchain with G-Cter in SUMO2) linkage. Positions 714–789 (LTELGHPRKR…PGGQAGRNCG (76 aa)) are disordered. Residues 734-743 (KPKRKRRSRK) show a composition bias toward basic residues. Phosphoserine is present on residues S825 and S842. At R887 the chain carries Omega-N-methylarginine. A Phosphoserine modification is found at S892. A disordered region spans residues 942–967 (KLAPPPSAVARSPTTHPPANTYPPQY). A Phosphoserine modification is found at S1060. Disordered regions lie at residues 1152–1191 (VSET…QSSL) and 1245–1306 (STSA…PDLG). Composition is skewed to low complexity over residues 1153 to 1168 (SETF…QFSQ), 1180 to 1191 (SEASSSEGQSSL), and 1245 to 1264 (STSA…PRQP). At S1180 the chain carries Phosphoserine. Phosphoserine occurs at positions 1315, 1317, and 1392. At T1394 the chain carries Phosphothreonine. S1396 carries the post-translational modification Phosphoserine. Residue K1402 forms a Glycyl lysine isopeptide (Lys-Gly) (interchain with G-Cter in SUMO2) linkage. The segment at 1495 to 1525 (HLASPPATPKADKEPLEMARPPGPPRGPAAA) is disordered. Residues S1498 and S1540 each carry the phosphoserine modification.

The protein localises to the nucleus. The protein resides in the chromosome. Transcription factor required for the proper patterning of the epidermis, which plays a key role in early epithelial morphogenesis. Directly binds promoter and enhancer regions and acts by maintaining local enhancer-promoter chromatin architecture. Interacts with many sequence-specific zinc-finger transcription factors and methyl-CpG-binding proteins to regulate the expression of mesoderm genes that wire surface ectoderm stratification. The sequence is that of Transcription factor Gibbin from Mus musculus (Mouse).